Here is a 197-residue protein sequence, read N- to C-terminus: Probable nicotinate-nucleotide adenylyltransferase (197 aa).

Belongs to the NadD family.

It carries out the reaction nicotinate beta-D-ribonucleotide + ATP + H(+) = deamido-NAD(+) + diphosphate. Its pathway is cofactor biosynthesis; NAD(+) biosynthesis; deamido-NAD(+) from nicotinate D-ribonucleotide: step 1/1. Catalyzes the reversible adenylation of nicotinate mononucleotide (NaMN) to nicotinic acid adenine dinucleotide (NaAD). The sequence is that of Probable nicotinate-nucleotide adenylyltransferase from Thermosipho melanesiensis (strain DSM 12029 / CIP 104789 / BI429).